A 1068-amino-acid chain; its full sequence is Tricorn protease homolog (1068 aa).

The segment at 61–326 (MKAYYMYPDI…DSLTKLDINL (266 aa)) is six-bladed beta propeller. The seven-bladed beta propeller stretch occupies residues 338-686 (VNVMEYMNEA…RKGGVIDLSR (349 aa)). The interval 692 to 762 (EPEKEWRQML…RTSHSYETAY (71 aa)) is C-1. His-756 (charge relay system) is an active-site residue. Positions 771 to 864 (SVGGLGAEFE…RVTVKVLKDE (94 aa)) are PDZ-like. The interval 865–1068 (RFLIYRYWVE…TAIELALKQL (204 aa)) is C-2. Position 927 (Gly-927) interacts with substrate. The active-site Nucleophile is Ser-974. The active-site Charge relay system is Glu-1032.

Belongs to the peptidase S41B family.

The protein resides in the cytoplasm. Functionally, degrades oligopeptides in a sequential manner. This is Tricorn protease homolog (tri) from Saccharolobus solfataricus (strain ATCC 35092 / DSM 1617 / JCM 11322 / P2) (Sulfolobus solfataricus).